Reading from the N-terminus, the 354-residue chain is Phospho-N-acetylmuramoyl-pentapeptide-transferase (354 aa).

The next 10 membrane-spanning stretches (helical) occupy residues 23–43 (IAFF…IAWA), 66–86 (TPTM…LLCS), 88–108 (LTNT…FIGF), 138–158 (FALS…FIPF), 161–181 (YALF…ITAS), 193–213 (GLAS…VYLC), 227–247 (VVGV…ILGF), 257–277 (VFMG…TGVV), 282–302 (ILLI…ILQV), and 331–351 (KIIV…LTTL).

Belongs to the glycosyltransferase 4 family. MraY subfamily. Mg(2+) is required as a cofactor.

Its subcellular location is the cell inner membrane. The enzyme catalyses UDP-N-acetyl-alpha-D-muramoyl-L-alanyl-gamma-D-glutamyl-meso-2,6-diaminopimeloyl-D-alanyl-D-alanine + di-trans,octa-cis-undecaprenyl phosphate = di-trans,octa-cis-undecaprenyl diphospho-N-acetyl-alpha-D-muramoyl-L-alanyl-D-glutamyl-meso-2,6-diaminopimeloyl-D-alanyl-D-alanine + UMP. The protein operates within cell wall biogenesis; peptidoglycan biosynthesis. Catalyzes the initial step of the lipid cycle reactions in the biosynthesis of the cell wall peptidoglycan: transfers peptidoglycan precursor phospho-MurNAc-pentapeptide from UDP-MurNAc-pentapeptide onto the lipid carrier undecaprenyl phosphate, yielding undecaprenyl-pyrophosphoryl-MurNAc-pentapeptide, known as lipid I. This Campylobacter hominis (strain ATCC BAA-381 / DSM 21671 / CCUG 45161 / LMG 19568 / NCTC 13146 / CH001A) protein is Phospho-N-acetylmuramoyl-pentapeptide-transferase.